Here is a 92-residue protein sequence, read N- to C-terminus: Protein S100-A5 (92 aa).

2 EF-hand domains span residues 12–47 (MVTT…LGEM) and 47–82 (MKES…LCMA). Residues threonine 28, glutamate 33, aspartate 60, asparagine 62, aspartate 64, glutamate 66, and glutamate 71 each contribute to the Ca(2+) site.

Belongs to the S-100 family. As to quaternary structure, homodimer.

Functionally, binds calcium, zinc and copper. One subunit can simultaneously bind 2 calcium ions or 2 copper ions plus 1 zinc ion. Calcium and copper ions compete for the same binding sites. This Homo sapiens (Human) protein is Protein S100-A5 (S100A5).